Here is a 436-residue protein sequence, read N- to C-terminus: MTVYHFVGIKGTGMSSLAQILHDMKHTVQGSDYEKRFFTQTALEKRSISILPFDKNNVEEGQVIIAGNAFPDTHEEIVAAKELNIPVHRYHHFLGDLMSQYTSVAVTGAHGKTSTTGLLAHVMQGAHPTSYLIGDGTGHGVENSKYFVFEACEYRRHFLSYNPDYAIMTNIDFDHPDYFADINDVFSAFQEMALQVKKGIIACGDDEELQKIQAKVPVIFYGFGEDNDFQARNIQKRTDGTIFDVFVRNTYYDTFKITGYGNHSVLNALAVIALCHYENVDVEAVKHQLTTFEGVKRRFNEKPMGEQVIIDDYAHHPTEINATIEAARQKHPEREVVAVFQPHTFSRTEKFLDEFAESLSKADQVYLCDIFGSARENKGELTIEDLQKRIDGAELITDTTTDVLKKHKNGVLIFMGAGDIQKFEAAYVKEVQVAEK.

G108–S114 is an ATP binding site.

This sequence belongs to the MurCDEF family.

It is found in the cytoplasm. The enzyme catalyses UDP-N-acetyl-alpha-D-muramate + L-alanine + ATP = UDP-N-acetyl-alpha-D-muramoyl-L-alanine + ADP + phosphate + H(+). It participates in cell wall biogenesis; peptidoglycan biosynthesis. Cell wall formation. This Bacillus cereus (strain G9842) protein is UDP-N-acetylmuramate--L-alanine ligase.